Consider the following 245-residue polypeptide: 8-amino-3,8-dideoxy-manno-octulosonate cytidylyltransferase (245 aa).

Belongs to the KdsB family.

The protein localises to the cytoplasm. The catalysed reaction is 8-amino-3,8-dideoxy-alpha-D-manno-octulosonate + CTP = CMP-8-amino-3,8-dideoxy-alpha-D-manno-oct-2-ulosonate + diphosphate. It participates in bacterial outer membrane biogenesis; lipopolysaccharide biosynthesis. Functionally, activates KDO8N (a required 8-carbon sugar) for incorporation into bacterial lipopolysaccharide in the Shewanella genus. In Shewanella sediminis (strain HAW-EB3), this protein is 8-amino-3,8-dideoxy-manno-octulosonate cytidylyltransferase.